The following is a 367-amino-acid chain: Probable outer membrane usher protein LpfC (367 aa).

The N-terminal stretch at 1-30 (MSRKTVSRTFSSFSISVVAVAVASTFSAHA) is a signal peptide.

This sequence belongs to the fimbrial export usher family.

Its subcellular location is the cell outer membrane. Its function is as follows. Part of the lpfABCC'DE fimbrial operon. LP fimbriae may participate in the interaction with eukaryotic cells by assisting in microcolony formation. Could be involved in the export and assembly of the fimbrial subunits across the outer membrane. This is Probable outer membrane usher protein LpfC (lpfC) from Escherichia coli O157:H7.